The sequence spans 106 residues: MNDSEFHQLADQLMLCIEETLDGFSGDSDIDYETNGGVMTLTFENGSKIVINRQEPLHQVWLATKAGGYHFDYREGHWYCSRSGEEFFTKLSEAATAQAGEVVSFS.

The protein belongs to the frataxin family.

Its function is as follows. Involved in iron-sulfur (Fe-S) cluster assembly. May act as a regulator of Fe-S biogenesis. The sequence is that of Iron-sulfur cluster assembly protein CyaY from Yersinia enterocolitica serotype O:8 / biotype 1B (strain NCTC 13174 / 8081).